Consider the following 597-residue polypeptide: Dictomallein-3 (597 aa).

The N-terminal stretch at 1 to 19 (MKLILILIFLFSCILFINC) is a signal peptide. Residues 148-409 (PDVGQDYTLK…QNYFKNSIYY (262 aa)) enclose the Peptidase M66 domain. H301 provides a ligand contact to Zn(2+). The active site involves E302. Zn(2+) is bound by residues H305 and H311.

The protein belongs to the dictomallein family. Requires Zn(2+) as cofactor.

Its subcellular location is the secreted. The sequence is that of Dictomallein-3 (dtmlC) from Dictyostelium discoideum (Social amoeba).